The chain runs to 627 residues: Zinc cluster transcription factor acuM (627 aa).

Disordered regions lie at residues 1 to 40 (MGCR…PARP), 129 to 148 (NGTA…GTME), 155 to 193 (AEGD…RRKV), 225 to 258 (CHDE…FSNA), 277 to 305 (PDGT…QNSL), and 394 to 416 (AQPS…PSST). Residues 162–171 (MESGSKNTAS) are compositionally biased toward polar residues. The segment at residues 197–225 (CVYCRRSHMTCDSERPCTRCIKRNIGHLC) is a DNA-binding region (zn(2)-C6 fungal-type). The segment covering 225–251 (CHDEPREPSKRARSEHEHSTAEEDGHS) has biased composition (basic and acidic residues). The span at 286–305 (SSVSAVQHNTIPSSSAQNSL) shows a compositional bias: polar residues. Residues 394-403 (AQPSQPTQSQ) show a composition bias toward low complexity. Residues 404–416 (PHQNDSVQGPSST) show a composition bias toward polar residues.

It localises to the nucleus. Transcription factor that governs genes involved in reductive and siderophore-mediated iron acquisition, and carbon metabolism. Suppresses the expression of sreA and induces hapX to stimulate expression of genes involved in both reductive iron assimilation and siderophore-mediated iron uptake which is essential for the maximal virulence. Also regulates genes involved in gluconeogenesis. In Aspergillus fumigatus (strain ATCC MYA-4609 / CBS 101355 / FGSC A1100 / Af293) (Neosartorya fumigata), this protein is Zinc cluster transcription factor acuM.